The primary structure comprises 208 residues: MDATIKVTKPVLKQKDSSAANLVAAIYGLLFVSGEKGLTLAELNRVLRKVGLEKIKAALVQLERKLSLDDESGIEIKKFGHSFRLVTKMEIKDFIHRYLPNKIKNPLNSKTMEVLAIIAYNQPCTRPRINEIRGADSFQIVDDLLEKELIVELGRKDTPGRPFIYEVSPKFYDLFGINSLDELPKVENFDLDKFRQGSFFDSNRYGDD.

This sequence belongs to the ScpB family. As to quaternary structure, homodimer. Homodimerization may be required to stabilize the binding of ScpA to the Smc head domains. Component of a cohesin-like complex composed of ScpA, ScpB and the Smc homodimer, in which ScpA and ScpB bind to the head domain of Smc. The presence of the three proteins is required for the association of the complex with DNA.

It localises to the cytoplasm. Participates in chromosomal partition during cell division. May act via the formation of a condensin-like complex containing Smc and ScpA that pull DNA away from mid-cell into both cell halves. In Mycoplasma pneumoniae (strain ATCC 29342 / M129 / Subtype 1) (Mycoplasmoides pneumoniae), this protein is Segregation and condensation protein B.